Reading from the N-terminus, the 237-residue chain is Ribonuclease PH (237 aa).

Phosphate-binding positions include arginine 86 and 124-126; that span reads GTR.

It belongs to the RNase PH family. In terms of assembly, homohexameric ring arranged as a trimer of dimers.

It carries out the reaction tRNA(n+1) + phosphate = tRNA(n) + a ribonucleoside 5'-diphosphate. Functionally, phosphorolytic 3'-5' exoribonuclease that plays an important role in tRNA 3'-end maturation. Removes nucleotide residues following the 3'-CCA terminus of tRNAs; can also add nucleotides to the ends of RNA molecules by using nucleoside diphosphates as substrates, but this may not be physiologically important. Probably plays a role in initiation of 16S rRNA degradation (leading to ribosome degradation) during starvation. In Methylorubrum extorquens (strain PA1) (Methylobacterium extorquens), this protein is Ribonuclease PH.